The following is a 589-amino-acid chain: Sulfite reductase [NADPH] hemoprotein beta-component (589 aa).

[4Fe-4S] cluster is bound by residues C443, C449, C488, and C492. C492 provides a ligand contact to siroheme.

It belongs to the nitrite and sulfite reductase 4Fe-4S domain family. In terms of assembly, alpha(8)-beta(8). The alpha component is a flavoprotein, the beta component is a hemoprotein. Siroheme serves as cofactor. It depends on [4Fe-4S] cluster as a cofactor.

The catalysed reaction is hydrogen sulfide + 3 NADP(+) + 3 H2O = sulfite + 3 NADPH + 4 H(+). It functions in the pathway sulfur metabolism; hydrogen sulfide biosynthesis; hydrogen sulfide from sulfite (NADPH route): step 1/1. In terms of biological role, component of the sulfite reductase complex that catalyzes the 6-electron reduction of sulfite to sulfide. This is one of several activities required for the biosynthesis of L-cysteine from sulfate. This Neisseria meningitidis serogroup C / serotype 2a (strain ATCC 700532 / DSM 15464 / FAM18) protein is Sulfite reductase [NADPH] hemoprotein beta-component.